The chain runs to 335 residues: Ketol-acid reductoisomerase (NADP(+)) (335 aa).

A KARI N-terminal Rossmann domain is found at 2 to 182; that stretch reads AKIIYDNETT…GATRAGVYET (181 aa). Residues 25-28, arginine 48, serine 51, serine 53, and 83-86 each bind NADP(+); these read YGSQ and DENQ. The active site involves histidine 108. Residue glycine 134 participates in NADP(+) binding. Residues 183 to 328 enclose the KARI C-terminal knotted domain; it reads TFREETETDL…KQIRANIPWL (146 aa). Mg(2+)-binding residues include aspartate 191, glutamate 195, glutamate 227, and glutamate 231. Serine 252 contacts substrate.

It belongs to the ketol-acid reductoisomerase family. Requires Mg(2+) as cofactor.

It carries out the reaction (2R)-2,3-dihydroxy-3-methylbutanoate + NADP(+) = (2S)-2-acetolactate + NADPH + H(+). The enzyme catalyses (2R,3R)-2,3-dihydroxy-3-methylpentanoate + NADP(+) = (S)-2-ethyl-2-hydroxy-3-oxobutanoate + NADPH + H(+). It functions in the pathway amino-acid biosynthesis; L-isoleucine biosynthesis; L-isoleucine from 2-oxobutanoate: step 2/4. Its pathway is amino-acid biosynthesis; L-valine biosynthesis; L-valine from pyruvate: step 2/4. Functionally, involved in the biosynthesis of branched-chain amino acids (BCAA). Catalyzes an alkyl-migration followed by a ketol-acid reduction of (S)-2-acetolactate (S2AL) to yield (R)-2,3-dihydroxy-isovalerate. In the isomerase reaction, S2AL is rearranged via a Mg-dependent methyl migration to produce 3-hydroxy-3-methyl-2-ketobutyrate (HMKB). In the reductase reaction, this 2-ketoacid undergoes a metal-dependent reduction by NADPH to yield (R)-2,3-dihydroxy-isovalerate. In Methanosarcina barkeri (strain Fusaro / DSM 804), this protein is Ketol-acid reductoisomerase (NADP(+)).